A 554-amino-acid chain; its full sequence is CTP synthase (554 aa).

Positions 1-265 are amidoligase domain; that stretch reads MTPLIFVTGG…DELVIDQFKL (265 aa). Ser-13 is a binding site for CTP. Ser-13 contacts UTP. ATP is bound by residues 14–19 and Asp-71; that span reads SLGKGI. Residues Asp-71 and Glu-139 each coordinate Mg(2+). CTP contacts are provided by residues 146-148, 186-191, and Lys-222; these read DIE and KTKPTQ. Residues 186 to 191 and Lys-222 each bind UTP; that span reads KTKPTQ. A Glutamine amidotransferase type-1 domain is found at 292–545; sequence TIAVVGKYVD…VRAAREKKAG (254 aa). Gly-353 lines the L-glutamine pocket. Cys-380 acts as the Nucleophile; for glutamine hydrolysis in catalysis. L-glutamine-binding positions include 381-384, Glu-404, and Arg-471; that span reads YGMQ. Active-site residues include His-518 and Glu-520.

This sequence belongs to the CTP synthase family. Homotetramer.

It carries out the reaction UTP + L-glutamine + ATP + H2O = CTP + L-glutamate + ADP + phosphate + 2 H(+). The enzyme catalyses L-glutamine + H2O = L-glutamate + NH4(+). It catalyses the reaction UTP + NH4(+) + ATP = CTP + ADP + phosphate + 2 H(+). The protein operates within pyrimidine metabolism; CTP biosynthesis via de novo pathway; CTP from UDP: step 2/2. Allosterically activated by GTP, when glutamine is the substrate; GTP has no effect on the reaction when ammonia is the substrate. The allosteric effector GTP functions by stabilizing the protein conformation that binds the tetrahedral intermediate(s) formed during glutamine hydrolysis. Inhibited by the product CTP, via allosteric rather than competitive inhibition. Catalyzes the ATP-dependent amination of UTP to CTP with either L-glutamine or ammonia as the source of nitrogen. Regulates intracellular CTP levels through interactions with the four ribonucleotide triphosphates. This chain is CTP synthase, found in Xanthomonas campestris pv. campestris (strain 8004).